The following is a 141-amino-acid chain: Large ribosomal subunit protein uL16 (141 aa).

Belongs to the universal ribosomal protein uL16 family. Part of the 50S ribosomal subunit.

In terms of biological role, binds 23S rRNA and is also seen to make contacts with the A and possibly P site tRNAs. This is Large ribosomal subunit protein uL16 from Campylobacter jejuni subsp. jejuni serotype O:6 (strain 81116 / NCTC 11828).